The following is a 348-amino-acid chain: Inosamine-phosphate amidinotransferase 1 (348 aa).

Catalysis depends on residues Asp179 and His227. The active-site Amidino-cysteine intermediate is the Cys332.

It belongs to the amidinotransferase family. Homodimer.

It carries out the reaction 1-amino-1-deoxy-scyllo-inositol 4-phosphate + L-arginine = 1-guanidino-1-deoxy-scyllo-inositol 4-phosphate + L-ornithine. The protein operates within antibiotic biosynthesis; streptomycin biosynthesis. Its function is as follows. Catalyzes two non-consecutive transamidination reactions. It converts scyllo-inosamine 4-phosphate into N-amidino-scyllo-inosamine 4-phosphate and N1-amidinostreptamine 6-phosphate into streptidine 6-phosphate. The chain is Inosamine-phosphate amidinotransferase 1 (strB1) from Streptomyces glaucescens.